Here is a 182-residue protein sequence, read N- to C-terminus: Ribosome-recycling factor (182 aa).

The interval 137–158 (KKSEKESEISEDQSRDEQDNVQ) is disordered.

It belongs to the RRF family.

It localises to the cytoplasm. Responsible for the release of ribosomes from messenger RNA at the termination of protein biosynthesis. May increase the efficiency of translation by recycling ribosomes from one round of translation to another. This is Ribosome-recycling factor from Prochlorococcus marinus (strain MIT 9211).